Reading from the N-terminus, the 406-residue chain is Olfactomedin-like protein 3 (406 aa).

The signal sequence occupies residues 1-21 (MGPSAPLLLFFLLSWPGSLQG). The stretch at 22–101 (QQHHLVEYME…REVDYLETQN (80 aa)) forms a coiled coil. The Olfactomedin-like domain maps to 134–401 (DCSYTISQVR…QIVYKLEMKK (268 aa)). Cys135 and Cys328 are disulfide-bonded. Asn248 is a glycosylation site (N-linked (GlcNAc...) asparagine).

This sequence belongs to the OLFML3 family.

Its subcellular location is the secreted. Functionally, secreted scaffold protein that plays an essential role in dorsoventral patterning during early development. Stabilizes axial formation by restricting chordin (CHRD) activity on the dorsal side. Acts by facilitating the association between the tolloid proteases and their substrate chordin (CHRD), leading to enhance chordin (CHRD) degradation. May have matrix-related function involved in placental and embryonic development, or play a similar role in other physiological processes. This chain is Olfactomedin-like protein 3 (Olfml3), found in Rattus norvegicus (Rat).